The primary structure comprises 580 residues: MSVRSLPAALRACARLQPHDPAFTFMDYEQDWDGVAITLTWSQLYRRTLNVAQELSRCGSTGDRVVISAPQGLEYVVAFLGALQAGRIAVPLSVPQGGVTDERSDSVLSDSSPVAILTTSSAVDDVVQHVARRPGESPPSIIEVDLLDLDAPNGYTFKEDEYPSTAYLQYTSGSTRTPAGVVMSHQNVRVNFEQLMSGYFADTDGIPPPNSALVSWLPFYHDMGLVIGICAPILGGYPAVLTSPVSFLQRPARWMHLMASDFHAFSAAPNFAFELAARRTTDDDMAGRDLGNILTILSGSERVQAATIKRFADRFARFNLQERVIRPSYGLAEATVYVATSKPGQPPETVDFDTESLSAGHAKPCAGGGATSLISYMLPRSPIVRIVDSDTCIECPDGTVGEIWVHGDNVANGYWQKPDESERTFGGKIVTPSPGTPEGPWLRTGDSGFVTDGKMFIIGRIKDLLIVYGRNHSPDDIEATIQEITRGRCAAISVPGDRSTEKLVAIIELKKRGDSDQDAMARLGAIKREVTSALSSSHGLSVADLVLVAPGSIPITTSGKVRRGACVEQYRQDQFARLDA.

A disordered region spans residues 421–440 (SERTFGGKIVTPSPGTPEGP).

It belongs to the ATP-dependent AMP-binding enzyme family.

It carries out the reaction holo-[mycocerosate synthase] + a long-chain fatty acid + ATP = a long-chain fatty acyl-[mycocerosate synthase] + AMP + diphosphate. The catalysed reaction is a long-chain fatty acid + ATP + H(+) = a long-chain fatty acyl-AMP + diphosphate. It catalyses the reaction holo-[mycocerosate synthase] + a long-chain fatty acyl-AMP = a long-chain fatty acyl-[mycocerosate synthase] + AMP + H(+). Its pathway is lipid metabolism; fatty acid biosynthesis. Its function is as follows. Involved in the biosynthesis of phthiocerol dimycocerosate (PDIM), a cell wall-associated lipid found only in pathogenic mycobacteria. Catalyzes the activation of long-chain fatty acids as acyl-adenylates (acyl-AMP), which are then transferred to the multifunctional polyketide synthase Mas for further chain extension. The polypeptide is Long-chain-fatty-acid--AMP ligase FadD28 (fadD28) (Mycobacterium tuberculosis (strain CDC 1551 / Oshkosh)).